A 261-amino-acid chain; its full sequence is Serine acetyltransferase (261 aa).

It belongs to the transferase hexapeptide repeat family.

The protein resides in the cytoplasm. The enzyme catalyses L-serine + acetyl-CoA = O-acetyl-L-serine + CoA. Its pathway is amino-acid biosynthesis; L-cysteine biosynthesis; L-cysteine from L-serine: step 1/2. This Buchnera aphidicola subsp. Schizaphis graminum (strain Sg) protein is Serine acetyltransferase (cysE).